The primary structure comprises 852 residues: Exported protein YdbA (852 aa).

A signal peptide spans 1 to 21; that stretch reads MQRKTLLSACIALALSGQGWA. Disordered stretches follow at residues 30 to 50, 91 to 145, 307 to 354, 407 to 449, and 506 to 531; these read TTGE…KLSP, DDDH…FNND, TITN…QDGD, TNGG…KVIQ, and NGGT…VDGK. The span at 307 to 319 shows a compositional bias: low complexity; it reads TITNGGTGTQING. A compositionally biased stretch (polar residues) spans 339–348; it reads GTEINGNNGK. Residues 506–516 show a composition bias toward low complexity; it reads NGGTGTQINGN. Residues 517-526 are compositionally biased toward polar residues; it reads DATANNSGKT.

It is found in the secreted. Its function is as follows. The full-length protein (which is about 2000 amino acids long) is part of the autotransporter family. In Escherichia coli (strain K12), this protein is Exported protein YdbA (ydbA).